The chain runs to 380 residues: Bifunctional dihydropteroate synthase/dihydropteroate reductase (380 aa).

The dihydropteroate reductase stretch occupies residues 1-104 (MIVKRLNPDA…SQPFGLKHLA (104 aa)). The segment at 105–380 (QELKSHLKAP…KVFKSLEETD (276 aa)) is dihydropteroate synthase. A Pterin-binding domain is found at 119-371 (PQIMAVLNLT…DIDEHIDLIK (253 aa)). Asn126 contacts Mg(2+). (7,8-dihydropterin-6-yl)methyl diphosphate-binding positions include Asp202, Asn221, Asp289, Lys325, and 359-361 (RVH).

It in the C-terminal section; belongs to the DHPS family. FAD serves as cofactor. The cofactor is FMN. It depends on Mg(2+) as a cofactor.

The enzyme catalyses (7,8-dihydropterin-6-yl)methyl diphosphate + 4-aminobenzoate = 7,8-dihydropteroate + diphosphate. It carries out the reaction (6S)-5,6,7,8-tetrahydropteroate + NAD(+) = 7,8-dihydropteroate + NADH + H(+). It participates in cofactor biosynthesis; tetrahydrofolate biosynthesis; 7,8-dihydrofolate from 2-amino-4-hydroxy-6-hydroxymethyl-7,8-dihydropteridine diphosphate and 4-aminobenzoate: step 1/2. Bifunctional enzyme that catalyzes the formation of dihydropteroate, the immediate precursor of folic acid and the reduction of dihydropteroate to tetrahydropteroate. This is Bifunctional dihydropteroate synthase/dihydropteroate reductase from Helicobacter pylori (strain ATCC 700392 / 26695) (Campylobacter pylori).